Consider the following 265-residue polypeptide: Hydroxyethylthiazole kinase (265 aa).

Met36 lines the substrate pocket. Residues Lys112 and Ser160 each contribute to the ATP site. Gly187 contributes to the substrate binding site.

The protein belongs to the Thz kinase family. Mg(2+) serves as cofactor.

The enzyme catalyses 5-(2-hydroxyethyl)-4-methylthiazole + ATP = 4-methyl-5-(2-phosphooxyethyl)-thiazole + ADP + H(+). Its pathway is cofactor biosynthesis; thiamine diphosphate biosynthesis; 4-methyl-5-(2-phosphoethyl)-thiazole from 5-(2-hydroxyethyl)-4-methylthiazole: step 1/1. Functionally, catalyzes the phosphorylation of the hydroxyl group of 4-methyl-5-beta-hydroxyethylthiazole (THZ). The chain is Hydroxyethylthiazole kinase from Clostridium perfringens (strain ATCC 13124 / DSM 756 / JCM 1290 / NCIMB 6125 / NCTC 8237 / Type A).